Consider the following 132-residue polypeptide: Profilin-1 (132 aa).

This sequence belongs to the profilin family. In terms of assembly, occurs in many kinds of cells as a complex with monomeric actin in a 1:1 ratio. Expressed in the nerve ring during late embryonic stages. In adults, expression is seen in the neurons, vulva and somatic gonad.

It localises to the cytoplasm. It is found in the cytoskeleton. In terms of biological role, binds to actin and affects the structure of the cytoskeleton. At high concentrations, profilin prevents the polymerization of actin, whereas it enhances it at low concentrations. By binding to PIP2, it inhibits the formation of IP3 and DG. Also binds to poly(L-proline) and phosphatidylinositol 4,5-bisphosphate micelles. This Caenorhabditis elegans protein is Profilin-1 (pfn-1).